The sequence spans 148 residues: Probable transcriptional regulator SyrB (148 aa).

The interval 1 to 58 is disordered; the sequence is MADESNTGPVAAAEAVAETQAPAGKRKSSSRRQRTAAGQVAESKTTAKPKRYSETERA. Low complexity predominate over residues 7–23; the sequence is TGPVAAAEAVAETQAPA. A compositionally biased stretch (basic residues) spans 24-34; sequence GKRKSSSRRQR.

It belongs to the SyrB family.

Responsible for the repression of SyrM activity. This Sinorhizobium fredii (strain NBRC 101917 / NGR234) protein is Probable transcriptional regulator SyrB (syrB).